A 497-amino-acid chain; its full sequence is Homeotic protein empty spiracles (497 aa).

3 disordered regions span residues 34–117 (NDVS…HLSP), 161–262 (SPLQ…MMMP), and 441–497 (NRRT…DASH). Residues 35 to 50 (DVSTAGGNSTPDLSGP) show a composition bias toward polar residues. Positions 51–68 (QSPPPGERNVPGSPPQTP) are enriched in pro residues. Low complexity predominate over residues 96-117 (PHAQQQQQQHLQAPHPHPHLSP). The segment covering 161–176 (SPLQTRLSPETEQPQM) has biased composition (polar residues). Low complexity-rich tracts occupy residues 208–239 (PKSV…QQQQ) and 248–262 (PAMM…MMMP). A DNA-binding region (homeobox) is located at residues 391 to 450 (PKRIRTAFSPSQLLKLEHAFESNQYVVGAERKALAQNLNLSETQVKVWFQNRRTKHKRMQ). The segment covering 470–497 (GDEDDDELIDMEMDECPSDEEHELDASH) has biased composition (acidic residues).

This sequence belongs to the EMX homeobox family.

It is found in the nucleus. In terms of biological role, acts as a homeotic selector gene controlling antennal and mandibular segment identity. The polypeptide is Homeotic protein empty spiracles (ems) (Drosophila melanogaster (Fruit fly)).